Consider the following 344-residue polypeptide: Heat-inducible transcription repressor HrcA (344 aa).

The protein belongs to the HrcA family.

Its function is as follows. Negative regulator of class I heat shock genes (grpE-dnaK-dnaJ and groELS operons). Prevents heat-shock induction of these operons. The chain is Heat-inducible transcription repressor HrcA from Streptococcus pneumoniae (strain P1031).